A 723-amino-acid polypeptide reads, in one-letter code: BBSome complex assembly protein BBS10 (723 aa).

It belongs to the TCP-1 chaperonin family. In terms of assembly, component of a complex composed at least of MKKS, BBS10, BBS12, TCP1, CCT2, CCT3, CCT4, CCT5 and CCT8.

The protein localises to the cell projection. The protein resides in the cilium. In terms of biological role, probable molecular chaperone that assists the folding of proteins upon ATP hydrolysis. Plays a role in the assembly of BBSome, a complex involved in ciliogenesis regulating transports vesicles to the cilia. Involved in adipogenic differentiation. This Pongo abelii (Sumatran orangutan) protein is BBSome complex assembly protein BBS10 (BBS10).